Consider the following 150-residue polypeptide: Putative biopolymer transport protein ExbB-like 2 (150 aa).

3 helical membrane-spanning segments follow: residues 5–25, 63–83, and 97–117; these read VDYG…AIAI, APYI…MDLG, and LALA…AIVI.

Belongs to the ExbB/TolQ family.

Its subcellular location is the cell inner membrane. The protein is Putative biopolymer transport protein ExbB-like 2 of Helicobacter pylori (strain J99 / ATCC 700824) (Campylobacter pylori J99).